The chain runs to 209 residues: Casparian strip membrane protein 1 (209 aa).

Positions 1-35 (MKTGESTAIDIAPETNNSGPIGKKKSTTPLLAAPV) are disordered. Residues 1 to 46 (MKTGESTAIDIAPETNNSGPIGKKKSTTPLLAAPVPDRGTHRMKRG) are Cytoplasmic-facing. A helical membrane pass occupies residues 47–67 (LAIFDFVLRIGVLASALAAAA). Over 68-96 (AMGTSEQTLPFFTQFFQFEASYDDLPTFQ) the chain is Extracellular. A helical membrane pass occupies residues 97 to 117 (FFVVAMAVVAGYVVLSIPFSI). At 118–129 (VCIIRPHAAGPR) the chain is on the cytoplasmic side. Residues 130 to 150 (VLLLILDSVALTLNTAAAGAA) traverse the membrane as a helical segment. Over 151-182 (AAVVSLAHSGNSSTNWLAICNQFGDFCQQASG) the chain is Extracellular. The N-linked (GlcNAc...) asparagine glycan is linked to asparagine 161. Residues 183-203 (AVVGSFAAVLLFLLLILFSAL) form a helical membrane-spanning segment. Residues 204 to 209 (SLKNSH) are Cytoplasmic-facing.

It belongs to the Casparian strip membrane proteins (CASP) family. As to quaternary structure, homodimer and heterodimers.

The protein localises to the cell membrane. In terms of biological role, regulates membrane-cell wall junctions and localized cell wall deposition. Required for establishment of the Casparian strip membrane domain (CSD) and the subsequent formation of Casparian strips, a cell wall modification of the root endodermis that determines an apoplastic barrier between the intraorganismal apoplasm and the extraorganismal apoplasm and prevents lateral diffusion. The protein is Casparian strip membrane protein 1 of Cucumis melo (Muskmelon).